Consider the following 296-residue polypeptide: 4-hydroxybenzoate octaprenyltransferase (296 aa).

9 consecutive transmembrane segments (helical) span residues 28-48 (PIGI…AGKG), 52-72 (LNTV…GCVI), 102-122 (ALVL…FTNS), 123-140 (TTIW…CYPF), 146-166 (YYPQ…AFTA), 169-189 (GELP…TVGY), 219-239 (VIIL…GSRF), 241-261 (LGAF…WEFW), and 275-295 (FLHN…DYAL).

This sequence belongs to the UbiA prenyltransferase family. The cofactor is Mg(2+).

The protein resides in the cell inner membrane. It catalyses the reaction all-trans-octaprenyl diphosphate + 4-hydroxybenzoate = 4-hydroxy-3-(all-trans-octaprenyl)benzoate + diphosphate. The protein operates within cofactor biosynthesis; ubiquinone biosynthesis. Functionally, catalyzes the prenylation of para-hydroxybenzoate (PHB) with an all-trans polyprenyl group. Mediates the second step in the final reaction sequence of ubiquinone-8 (UQ-8) biosynthesis, which is the condensation of the polyisoprenoid side chain with PHB, generating the first membrane-bound Q intermediate 3-octaprenyl-4-hydroxybenzoate. The chain is 4-hydroxybenzoate octaprenyltransferase from Pseudomonas syringae pv. tomato (strain ATCC BAA-871 / DC3000).